A 138-amino-acid chain; its full sequence is Large ribosomal subunit protein bL19 (138 aa).

This sequence belongs to the bacterial ribosomal protein bL19 family.

Functionally, this protein is located at the 30S-50S ribosomal subunit interface and may play a role in the structure and function of the aminoacyl-tRNA binding site. This is Large ribosomal subunit protein bL19 from Rickettsia conorii (strain ATCC VR-613 / Malish 7).